We begin with the raw amino-acid sequence, 610 residues long: Aspartate--tRNA(Asp/Asn) ligase (610 aa).

Residue glutamate 196 participates in L-aspartate binding. Positions 220–223 are aspartate; sequence QIFK. Arginine 242 is an L-aspartate binding site. ATP-binding positions include 242–244 and glutamine 251; that span reads RDE. Histidine 465 is a binding site for L-aspartate. Glutamate 499 lines the ATP pocket. Arginine 506 is an L-aspartate binding site. 551–554 contributes to the ATP binding site; the sequence is GMDR.

Belongs to the class-II aminoacyl-tRNA synthetase family. Type 1 subfamily. As to quaternary structure, homodimer.

It localises to the cytoplasm. The enzyme catalyses tRNA(Asx) + L-aspartate + ATP = L-aspartyl-tRNA(Asx) + AMP + diphosphate. Aspartyl-tRNA synthetase with relaxed tRNA specificity since it is able to aspartylate not only its cognate tRNA(Asp) but also tRNA(Asn). Reaction proceeds in two steps: L-aspartate is first activated by ATP to form Asp-AMP and then transferred to the acceptor end of tRNA(Asp/Asn). The protein is Aspartate--tRNA(Asp/Asn) ligase of Nitratidesulfovibrio vulgaris (strain ATCC 29579 / DSM 644 / CCUG 34227 / NCIMB 8303 / VKM B-1760 / Hildenborough) (Desulfovibrio vulgaris).